The sequence spans 820 residues: Protein bicaudal D homolog 2 (820 aa).

Ser2 is modified (N-acetylserine). Positions 20–270 (EWLRAEVKRL…LSHYMSINDS (251 aa)) form a coiled coil. An interaction with DYNLL1, DYNC1H1, DYNC1I2, DCTN1 and DCTN2 region spans residues 25-400 (EVKRLSHELA…RLTENLSALR (376 aa)). Phosphoserine is present on residues Ser190, Ser224, and Ser320. The segment at 313 to 332 (SSLDNKTSTPRKDGLAPPSP) is disordered. Thr321 carries the phosphothreonine modification. The interaction with KIF5A stretch occupies residues 336-595 (SDLLSELHIS…LLATEVGRAD (260 aa)). Residues 340 to 539 (SELHISEIQK…VTFSEELANL (200 aa)) are a coiled coil. Ser345 and Ser397 each carry phosphoserine. Disordered regions lie at residues 400 to 427 (RRLQAGKERQTSLDNEKDRDSHEDGDYY), 563 to 582 (QGKAGRTSPEGRGRRSPVLL), 591 to 618 (VGRADGGTGDNSPSPSSSLPSPLSDPRR), and 799 to 820 (HEQTRRGRSKAASKAKPASPSL). A compositionally biased stretch (basic and acidic residues) spans 404 to 424 (AGKERQTSLDNEKDRDSHEDG). Ser570 and Ser578 each carry phosphoserine. The tract at residues 586–820 (LLATEVGRAD…SKAKPASPSL (235 aa)) is interaction with RANBP2. Thr598 bears the Phosphothreonine mark. The span at 602 to 614 (SPSPSSSLPSPLS) shows a compositional bias: low complexity. Residues 662-804 (DKDKEALMEE…LELDHEQTRR (143 aa)) are a coiled coil. Residues 662 to 810 (DKDKEALMEE…QTRRGRSKAA (149 aa)) are interaction with RAB6A. Residue Ser819 is modified to Phosphoserine.

It belongs to the BicD family. In terms of assembly, part of a tripartite complex with dynein and dynactin, acts an adapter linking the dynein motor complex and dynactin. Interacts with CPNE4 (via VWFA domain). Interacts with NEK9. Interacts with DCTN2. Interacts with RAB6A. Interacts with DNAI1. Interacts with DYNLL1, DYNC1H1, DYNC1I2 and DCTN1. Forms a complex with dynein and dynactin. The dynein-dynactin-BICD2 ternary complex (DDB) binds preferentially to tyrosinated microtubules than to detyrosinated microtubules. Interacts with RANBP2, RAB6A and KIF5A. Interacts with KIF1C. Post-translationally, phosphorylated by NEK9 in vitro. Ubiquitously expressed with high expression in the spinal cord.

Its subcellular location is the golgi apparatus. The protein resides in the cytoplasm. The protein localises to the cytoskeleton. It is found in the nucleus. It localises to the nuclear pore complex. Its subcellular location is the nucleus envelope. Functionally, acts as an adapter protein linking the dynein motor complex to various cargos and converts dynein from a non-processive to a highly processive motor in the presence of dynactin. Facilitates and stabilizes the interaction between dynein and dynactin and activates dynein processivity (the ability to move along a microtubule for a long distance without falling off the track). Facilitates the binding of RAB6A to the Golgi by stabilizing its GTP-bound form. Regulates coat complex coatomer protein I (COPI)-independent Golgi-endoplasmic reticulum transport via its interaction with RAB6A and recruitment of the dynein-dynactin motor complex. Contributes to nuclear and centrosomal positioning prior to mitotic entry through regulation of both dynein and kinesin-1. During G2 phase of the cell cycle, associates with RANBP2 at the nuclear pores and recruits dynein and dynactin to the nuclear envelope to ensure proper positioning of the nucleus relative to centrosomes prior to the onset of mitosis. The polypeptide is Protein bicaudal D homolog 2 (Bicd2) (Mus musculus (Mouse)).